The chain runs to 472 residues: Sarcalumenin (472 aa).

The first 20 residues, 1-20, serve as a signal peptide directing secretion; the sequence is MKRLNLLCCCVASLLLLGTA. N-linked (GlcNAc...) asparagine glycosylation is present at L59. The region spanning 89-330 is the Dynamin-type G domain; the sequence is ITSKPMVLFL…IENRMENKIA (242 aa). Positions 99 to 106 are G1 motif; the sequence is GPWSVGKS. The tract at residues 127-128 is G2 motif; that stretch reads EP. Residues 189-192 form a G3 motif region; the sequence is DTPG. Residues 254 to 257 are G4 motif; it reads NKAD. Residue L278 is a region of interest, G5 motif. N280 and N388 each carry an N-linked (GlcNAc...) asparagine glycan.

The protein belongs to the TRAFAC class dynamin-like GTPase superfamily. Dynamin/Fzo/YdjA family. Post-translationally, N-glycosylated.

It is found in the sarcoplasmic reticulum lumen. Its subcellular location is the sarcoplasmic reticulum membrane. This chain is Sarcalumenin (SRL), found in Gallus gallus (Chicken).